Here is a 104-residue protein sequence, read N- to C-terminus: L-rhamnose mutarotase (104 aa).

Tyr18 serves as a coordination point for substrate. The active-site Proton donor is the His22. Residues Tyr41 and 76–77 (WW) contribute to the substrate site.

This sequence belongs to the rhamnose mutarotase family. Homodimer.

It is found in the cytoplasm. It catalyses the reaction alpha-L-rhamnose = beta-L-rhamnose. It participates in carbohydrate metabolism; L-rhamnose metabolism. Functionally, involved in the anomeric conversion of L-rhamnose. This is L-rhamnose mutarotase from Burkholderia orbicola (strain MC0-3).